Reading from the N-terminus, the 35-residue chain is Photosystem II reaction center protein T (35 aa).

A helical transmembrane segment spans residues 3-23; it reads ALVYTFLLVGTLGIIFFAIFF.

This sequence belongs to the PsbT family. As to quaternary structure, PSII is composed of 1 copy each of membrane proteins PsbA, PsbB, PsbC, PsbD, PsbE, PsbF, PsbH, PsbI, PsbJ, PsbK, PsbL, PsbM, PsbT, PsbY, PsbZ, Psb30/Ycf12, at least 3 peripheral proteins of the oxygen-evolving complex and a large number of cofactors. It forms dimeric complexes.

It is found in the plastid. The protein localises to the chloroplast thylakoid membrane. Its function is as follows. Found at the monomer-monomer interface of the photosystem II (PS II) dimer, plays a role in assembly and dimerization of PSII. PSII is a light-driven water plastoquinone oxidoreductase, using light energy to abstract electrons from H(2)O, generating a proton gradient subsequently used for ATP formation. The protein is Photosystem II reaction center protein T of Chara vulgaris (Common stonewort).